The sequence spans 124 residues: Ribonuclease P protein component 2 (124 aa).

This sequence belongs to the eukaryotic/archaeal RNase P protein component 2 family. As to quaternary structure, consists of a catalytic RNA component and at least 4-5 protein subunits.

Its subcellular location is the cytoplasm. It carries out the reaction Endonucleolytic cleavage of RNA, removing 5'-extranucleotides from tRNA precursor.. Part of ribonuclease P, a protein complex that generates mature tRNA molecules by cleaving their 5'-ends. The sequence is that of Ribonuclease P protein component 2 from Methanothermobacter thermautotrophicus (strain ATCC 29096 / DSM 1053 / JCM 10044 / NBRC 100330 / Delta H) (Methanobacterium thermoautotrophicum).